The following is a 257-amino-acid chain: BTB/POZ domain-containing protein KCTD1 (257 aa).

The disordered stretch occupies residues 1-25; that stretch reads MSRPLITRSPASPLNNQGIPTPAQL. S9 and S12 each carry phosphoserine. A compositionally biased stretch (polar residues) spans 9 to 25; it reads SPASPLNNQGIPTPAQL. One can recognise a BTB domain in the interval 30–100; that stretch reads APVHIDVGGH…LRTSKLLIPD (71 aa).

As to quaternary structure, forms homopentamers. Interacts with KCTD15, probably forming heteropentamers depending on its abundance in a cell-type dependent manner. Interacts with TFAP2A, TFAP2B and TFAP2C via the BTB domain. In terms of processing, sumoylated. As to expression, expressed in mammary gland, kidney, brain and ovary.

The protein resides in the nucleus. May repress the transcriptional activity of AP-2 family members, including TFAP2A, TFAP2B and TFAP2C to various extent. This is BTB/POZ domain-containing protein KCTD1 (KCTD1) from Homo sapiens (Human).